The sequence spans 376 residues: Lipid-A-disaccharide synthase (376 aa).

It belongs to the LpxB family.

It catalyses the reaction a lipid X + a UDP-2-N,3-O-bis[(3R)-3-hydroxyacyl]-alpha-D-glucosamine = a lipid A disaccharide + UDP + H(+). It participates in bacterial outer membrane biogenesis; LPS lipid A biosynthesis. Its function is as follows. Condensation of UDP-2,3-diacylglucosamine and 2,3-diacylglucosamine-1-phosphate to form lipid A disaccharide, a precursor of lipid A, a phosphorylated glycolipid that anchors the lipopolysaccharide to the outer membrane of the cell. The sequence is that of Lipid-A-disaccharide synthase from Hydrogenovibrio crunogenus (strain DSM 25203 / XCL-2) (Thiomicrospira crunogena).